Consider the following 216-residue polypeptide: Protein-L-isoaspartate O-methyltransferase (216 aa).

Ser-64 is a catalytic residue.

It belongs to the methyltransferase superfamily. L-isoaspartyl/D-aspartyl protein methyltransferase family.

Its subcellular location is the cytoplasm. It carries out the reaction [protein]-L-isoaspartate + S-adenosyl-L-methionine = [protein]-L-isoaspartate alpha-methyl ester + S-adenosyl-L-homocysteine. Its function is as follows. Catalyzes the methyl esterification of L-isoaspartyl residues in peptides and proteins that result from spontaneous decomposition of normal L-aspartyl and L-asparaginyl residues. It plays a role in the repair and/or degradation of damaged proteins. The chain is Protein-L-isoaspartate O-methyltransferase from Paracoccus denitrificans (strain Pd 1222).